Reading from the N-terminus, the 407-residue chain is uncharacterized protein (407 aa).

The interval 145-231 (EANRFGRSNS…DPLTSITSDT (87 aa)) is disordered. A compositionally biased stretch (basic residues) spans 158–175 (SNSRSKSSRSRSNNRSKS). Low complexity predominate over residues 176-196 (SRSSSTQSKSNNRSNSRSNSK). The 137-residue stretch at 271 to 407 (IVFETLDQND…NHKIHMEKDI (137 aa)) folds into the N-acetyltransferase domain.

The protein resides in the virion. This is an uncharacterized protein from Acanthamoeba polyphaga (Amoeba).